Reading from the N-terminus, the 124-residue chain is Ribulose bisphosphate carboxylase small subunit (124 aa).

Belongs to the RuBisCO small chain family. Heterohexadecamer of 8 large and 8 small subunits.

RuBisCO catalyzes two reactions: the carboxylation of D-ribulose 1,5-bisphosphate, the primary event in carbon dioxide fixation, as well as the oxidative fragmentation of the pentose substrate. Both reactions occur simultaneously and in competition at the same active site. Although the small subunit is not catalytic it is essential for maximal activity. This chain is Ribulose bisphosphate carboxylase small subunit, found in Hydrogenophilus thermoluteolus (Pseudomonas hydrogenothermophila).